The primary structure comprises 779 residues: Polyribonucleotide nucleotidyltransferase (779 aa).

Asp490 and Asp496 together coordinate Mg(2+). A KH domain is found at 557 to 618 (PHILSLKINP…EAVKARIEAV (62 aa)). The S1 motif domain maps to 625–693 (GEEFEGTVVK…DRGKIDLIRP (69 aa)). The span at 699-752 (VPLREPRAPRGGDRGPRRDSDRGGDRGPRREFSDRGPRPEGARSERPEGQRTER) shows a compositional bias: basic and acidic residues. Positions 699–779 (VPLREPRAPR…AAPVFPRRED (81 aa)) are disordered. Over residues 757–767 (PATQESSQSSD) the composition is skewed to polar residues.

This sequence belongs to the polyribonucleotide nucleotidyltransferase family. Mg(2+) serves as cofactor.

It is found in the cytoplasm. The catalysed reaction is RNA(n+1) + phosphate = RNA(n) + a ribonucleoside 5'-diphosphate. Functionally, involved in mRNA degradation. Catalyzes the phosphorolysis of single-stranded polyribonucleotides processively in the 3'- to 5'-direction. In Deinococcus radiodurans (strain ATCC 13939 / DSM 20539 / JCM 16871 / CCUG 27074 / LMG 4051 / NBRC 15346 / NCIMB 9279 / VKM B-1422 / R1), this protein is Polyribonucleotide nucleotidyltransferase.